The chain runs to 379 residues: UDP-N-acetylglucosamine--N-acetylmuramyl-(pentapeptide) pyrophosphoryl-undecaprenol N-acetylglucosamine transferase (379 aa).

Residues 17 to 19 (TGG), asparagine 128, arginine 169, serine 197, and glutamine 298 contribute to the UDP-N-acetyl-alpha-D-glucosamine site.

It belongs to the glycosyltransferase 28 family. MurG subfamily.

The protein localises to the cell inner membrane. It catalyses the reaction di-trans,octa-cis-undecaprenyl diphospho-N-acetyl-alpha-D-muramoyl-L-alanyl-D-glutamyl-meso-2,6-diaminopimeloyl-D-alanyl-D-alanine + UDP-N-acetyl-alpha-D-glucosamine = di-trans,octa-cis-undecaprenyl diphospho-[N-acetyl-alpha-D-glucosaminyl-(1-&gt;4)]-N-acetyl-alpha-D-muramoyl-L-alanyl-D-glutamyl-meso-2,6-diaminopimeloyl-D-alanyl-D-alanine + UDP + H(+). Its pathway is cell wall biogenesis; peptidoglycan biosynthesis. Functionally, cell wall formation. Catalyzes the transfer of a GlcNAc subunit on undecaprenyl-pyrophosphoryl-MurNAc-pentapeptide (lipid intermediate I) to form undecaprenyl-pyrophosphoryl-MurNAc-(pentapeptide)GlcNAc (lipid intermediate II). The sequence is that of UDP-N-acetylglucosamine--N-acetylmuramyl-(pentapeptide) pyrophosphoryl-undecaprenol N-acetylglucosamine transferase from Brucella suis biovar 1 (strain 1330).